A 557-amino-acid chain; its full sequence is Tryptophan 2-monooxygenase (557 aa).

Residues serine 49, glutamate 69, arginine 71, arginine 77, and arginine 98 each contribute to the FMN site. Arginine 98 contacts substrate.

It belongs to the tryptophan 2-monooxygenase family. As to quaternary structure, monomer. The cofactor is FMN.

The catalysed reaction is L-tryptophan + O2 = indole-3-acetamide + CO2 + H2O. It participates in plant hormone metabolism; auxin biosynthesis. This chain is Tryptophan 2-monooxygenase (iaaM), found in Pseudomonas savastanoi (Pseudomonas syringae pv. savastanoi).